The primary structure comprises 300 residues: Ribonuclease HIII (300 aa).

The 215-residue stretch at 86-300 (RPRLGVDESG…FYEICDSTDI (215 aa)) folds into the RNase H type-2 domain. Asp92, Glu93, and Asp196 together coordinate a divalent metal cation.

The protein belongs to the RNase HII family. RnhC subfamily. The cofactor is Mn(2+). Mg(2+) is required as a cofactor.

It localises to the cytoplasm. The catalysed reaction is Endonucleolytic cleavage to 5'-phosphomonoester.. Endonuclease that specifically degrades the RNA of RNA-DNA hybrids. This Chlamydia abortus (strain DSM 27085 / S26/3) (Chlamydophila abortus) protein is Ribonuclease HIII.